The chain runs to 394 residues: Thioredoxin-interacting protein (394 aa).

K212 is covalently cross-linked (Glycyl lysine isopeptide (Lys-Gly) (interchain with G-Cter in ubiquitin)). S361 carries the phosphoserine modification.

The protein belongs to the arrestin family. Homodimer; disulfide-linked. Interacts with TXN/thioredoxin through its redox-active site. Interacts with transcriptional repressors ZBTB16, ZBTB32 and HDAC1. Interacts with DDIT4. Post-translationally, ubiquitinated; undergoes heterotypic 'Lys-48'-/'Lys-63'-branched polyubiquitination catalyzed by ITCH and UBR5 resulting in proteasomal degradation. Deubiquitinated by USP5, leading to TXNIP stabilization.

The protein localises to the cytoplasm. Functionally, may act as an oxidative stress mediator by inhibiting thioredoxin activity or by limiting its bioavailability. Interacts with COPS5 and restores COPS5-induced suppression of CDKN1B stability, blocking the COPS5-mediated translocation of CDKN1B from the nucleus to the cytoplasm. Functions as a transcriptional repressor, possibly by acting as a bridge molecule between transcription factors and corepressor complexes, and over-expression will induce G0/G1 cell cycle arrest. Required for the maturation of natural killer cells. Acts as a suppressor of tumor cell growth. Inhibits the proteasomal degradation of DDIT4, and thereby contributes to the inhibition of the mammalian target of rapamycin complex 1 (mTORC1). This Rattus norvegicus (Rat) protein is Thioredoxin-interacting protein (Txnip).